A 229-amino-acid chain; its full sequence is Ribosomal RNA small subunit methyltransferase G (229 aa).

S-adenosyl-L-methionine-binding positions include Gly71, 122-123, and Arg139; that span reads AE.

The protein belongs to the methyltransferase superfamily. RNA methyltransferase RsmG family.

Its subcellular location is the cytoplasm. Functionally, specifically methylates the N7 position of a guanine in 16S rRNA. In Thermotoga neapolitana (strain ATCC 49049 / DSM 4359 / NBRC 107923 / NS-E), this protein is Ribosomal RNA small subunit methyltransferase G.